Consider the following 449-residue polypeptide: Serine--tRNA ligase (449 aa).

255–257 (TSE) is an L-serine binding site. Residue 286–288 (RSE) participates in ATP binding. Glu-309 contributes to the L-serine binding site. 373-376 (EISS) is an ATP binding site. Ser-409 is a binding site for L-serine.

This sequence belongs to the class-II aminoacyl-tRNA synthetase family. Type-1 seryl-tRNA synthetase subfamily. In terms of assembly, homodimer. The tRNA molecule binds across the dimer.

It is found in the cytoplasm. It carries out the reaction tRNA(Ser) + L-serine + ATP = L-seryl-tRNA(Ser) + AMP + diphosphate + H(+). It catalyses the reaction tRNA(Sec) + L-serine + ATP = L-seryl-tRNA(Sec) + AMP + diphosphate + H(+). It participates in aminoacyl-tRNA biosynthesis; selenocysteinyl-tRNA(Sec) biosynthesis; L-seryl-tRNA(Sec) from L-serine and tRNA(Sec): step 1/1. Functionally, catalyzes the attachment of serine to tRNA(Ser). Is also able to aminoacylate tRNA(Sec) with serine, to form the misacylated tRNA L-seryl-tRNA(Sec), which will be further converted into selenocysteinyl-tRNA(Sec). The polypeptide is Serine--tRNA ligase (Bordetella avium (strain 197N)).